The chain runs to 500 residues: Probable cytosol aminopeptidase (500 aa).

Residues lysine 264 and aspartate 269 each coordinate Mn(2+). Residue lysine 276 is part of the active site. 3 residues coordinate Mn(2+): aspartate 287, aspartate 346, and glutamate 348. Residue arginine 350 is part of the active site.

This sequence belongs to the peptidase M17 family. It depends on Mn(2+) as a cofactor.

The protein localises to the cytoplasm. The enzyme catalyses Release of an N-terminal amino acid, Xaa-|-Yaa-, in which Xaa is preferably Leu, but may be other amino acids including Pro although not Arg or Lys, and Yaa may be Pro. Amino acid amides and methyl esters are also readily hydrolyzed, but rates on arylamides are exceedingly low.. The catalysed reaction is Release of an N-terminal amino acid, preferentially leucine, but not glutamic or aspartic acids.. Its function is as follows. Presumably involved in the processing and regular turnover of intracellular proteins. Catalyzes the removal of unsubstituted N-terminal amino acids from various peptides. The sequence is that of Probable cytosol aminopeptidase from Afipia carboxidovorans (strain ATCC 49405 / DSM 1227 / KCTC 32145 / OM5) (Oligotropha carboxidovorans).